We begin with the raw amino-acid sequence, 122 residues long: Large ribosomal subunit protein uL14c (122 aa).

Belongs to the universal ribosomal protein uL14 family. As to quaternary structure, part of the 50S ribosomal subunit.

The protein localises to the plastid. Its subcellular location is the chloroplast. Binds to 23S rRNA. The protein is Large ribosomal subunit protein uL14c of Huperzia lucidula (Shining clubmoss).